A 296-amino-acid chain; its full sequence is GTPase Era (296 aa).

Residues 7-174 (KCSMSAIVGT…VDYLCETSPY (168 aa)) form the Era-type G domain. The tract at residues 15–22 (GTTNAGKS) is G1. 15–22 (GTTNAGKS) contributes to the GTP binding site. The segment at 41 to 45 (QTTRV) is G2. Residues 62–65 (DTPG) are G3. GTP-binding positions include 62-66 (DTPGI) and 124-127 (NKID). The interval 124–127 (NKID) is G4. The G5 stretch occupies residues 153–155 (ISA). A KH type-2 domain is found at 205–282 (LRHELPYSLS…HLFLFVKVRE (78 aa)).

Belongs to the TRAFAC class TrmE-Era-EngA-EngB-Septin-like GTPase superfamily. Era GTPase family. Monomer.

It is found in the cytoplasm. It localises to the cell inner membrane. In terms of biological role, an essential GTPase that binds both GDP and GTP, with rapid nucleotide exchange. Plays a role in 16S rRNA processing and 30S ribosomal subunit biogenesis and possibly also in cell cycle regulation and energy metabolism. The polypeptide is GTPase Era (Ehrlichia ruminantium (strain Gardel)).